Here is a 121-residue protein sequence, read N- to C-terminus: Small ribosomal subunit protein bS6 (121 aa).

The interval 99-121 (PSLMMRNVEREEARKTQQQEFAA) is disordered. Residues 105–115 (NVEREEARKTQ) are compositionally biased toward basic and acidic residues.

Belongs to the bacterial ribosomal protein bS6 family.

Its function is as follows. Binds together with bS18 to 16S ribosomal RNA. This is Small ribosomal subunit protein bS6 from Polaromonas naphthalenivorans (strain CJ2).